The sequence spans 1406 residues: DNA-directed RNA polymerase subunit beta' (1406 aa).

The Zn(2+) site is built by C72, C74, C87, and C90. The Mg(2+) site is built by D462, D464, and D466. Residues C816, C889, C896, and C899 each contribute to the Zn(2+) site.

The protein belongs to the RNA polymerase beta' chain family. As to quaternary structure, the RNAP catalytic core consists of 2 alpha, 1 beta, 1 beta' and 1 omega subunit. When a sigma factor is associated with the core the holoenzyme is formed, which can initiate transcription. It depends on Mg(2+) as a cofactor. Zn(2+) serves as cofactor.

It catalyses the reaction RNA(n) + a ribonucleoside 5'-triphosphate = RNA(n+1) + diphosphate. Its function is as follows. DNA-dependent RNA polymerase catalyzes the transcription of DNA into RNA using the four ribonucleoside triphosphates as substrates. The protein is DNA-directed RNA polymerase subunit beta' of Psychrobacter sp. (strain PRwf-1).